The sequence spans 201 residues: 3-isopropylmalate dehydratase small subunit (201 aa).

Belongs to the LeuD family. LeuD type 1 subfamily. Heterodimer of LeuC and LeuD.

It carries out the reaction (2R,3S)-3-isopropylmalate = (2S)-2-isopropylmalate. Its pathway is amino-acid biosynthesis; L-leucine biosynthesis; L-leucine from 3-methyl-2-oxobutanoate: step 2/4. Functionally, catalyzes the isomerization between 2-isopropylmalate and 3-isopropylmalate, via the formation of 2-isopropylmaleate. The sequence is that of 3-isopropylmalate dehydratase small subunit from Escherichia fergusonii (strain ATCC 35469 / DSM 13698 / CCUG 18766 / IAM 14443 / JCM 21226 / LMG 7866 / NBRC 102419 / NCTC 12128 / CDC 0568-73).